Here is a 290-residue protein sequence, read N- to C-terminus: 4-hydroxybenzoate octaprenyltransferase (290 aa).

8 helical membrane passes run 21–41, 44–64, 97–117, 143–163, 168–188, 211–231, 235–255, and 270–290; these read IGTM…ADGM, LRVL…GCII, LFVV…PLVV, FLGV…TGEV, WWLF…YAMV, EIIG…GWSG, LLYG…QRLI, and NNWA…FAAL.

This sequence belongs to the UbiA prenyltransferase family. Mg(2+) serves as cofactor.

It localises to the cell inner membrane. The catalysed reaction is all-trans-octaprenyl diphosphate + 4-hydroxybenzoate = 4-hydroxy-3-(all-trans-octaprenyl)benzoate + diphosphate. Its pathway is cofactor biosynthesis; ubiquinone biosynthesis. Its function is as follows. Catalyzes the prenylation of para-hydroxybenzoate (PHB) with an all-trans polyprenyl group. Mediates the second step in the final reaction sequence of ubiquinone-8 (UQ-8) biosynthesis, which is the condensation of the polyisoprenoid side chain with PHB, generating the first membrane-bound Q intermediate 3-octaprenyl-4-hydroxybenzoate. In Shewanella amazonensis (strain ATCC BAA-1098 / SB2B), this protein is 4-hydroxybenzoate octaprenyltransferase.